The following is a 423-amino-acid chain: Hydroxymethylglutaryl-CoA synthase-like protein AKT4-1 (423 aa).

Belongs to the thiolase-like superfamily. HMG-CoA synthase family.

The protein operates within mycotoxin biosynthesis. Functionally, hydroxymethylglutaryl-CoA synthase-like protein; part of the gene clusters that mediate the biosynthesis of the host-selective toxins (HSTs) AK-toxins responsible for Japanese pear black spot disease by the Japanese pear pathotype. AK-toxins are esters of 9,10-epoxy 8-hydroxy 9-methyldecatrienoic acid (EDA). On cellular level, AK-toxins affect plasma membrane of susceptible cells and cause a sudden increase in loss of K(+) after a few minutes of toxin treatment. The acyl-CoA ligase AKT1, the hydrolase AKT2 and enoyl-CoA hydratase AKT3 are all involved in the biosynthesis of the AK-, AF- and ACT-toxin common 9,10-epoxy-8-hydroxy-9-methyl-decatrienoic acid (EDA) structural moiety. Part of the EDA biosynthesis occurs in the peroxisome since these 3 enzymes are localized in peroxisomes. The exact roles of the 3 enzymes, as well as of additional AK-toxin clusters enzymes, including AKT4, AKT6 and AKTS1, have still to be elucidated. The Cytochrome P450 monooxygenase AKT7 on the other side functions to limit production of EDA and AK-toxin, probably via the catalysis of a side reaction of EDA or its precursor. In Alternaria alternata (Alternaria rot fungus), this protein is Hydroxymethylglutaryl-CoA synthase-like protein AKT4-1.